Reading from the N-terminus, the 135-residue chain is Holo-[acyl-carrier-protein] synthase (135 aa).

Residues D7 and E57 each contribute to the Mg(2+) site.

It belongs to the P-Pant transferase superfamily. AcpS family. It depends on Mg(2+) as a cofactor.

The protein localises to the cytoplasm. The catalysed reaction is apo-[ACP] + CoA = holo-[ACP] + adenosine 3',5'-bisphosphate + H(+). Its function is as follows. Transfers the 4'-phosphopantetheine moiety from coenzyme A to a Ser of acyl-carrier-protein. This chain is Holo-[acyl-carrier-protein] synthase, found in Corynebacterium glutamicum (strain ATCC 13032 / DSM 20300 / JCM 1318 / BCRC 11384 / CCUG 27702 / LMG 3730 / NBRC 12168 / NCIMB 10025 / NRRL B-2784 / 534).